A 251-amino-acid polypeptide reads, in one-letter code: MKKAGLLFLVMIVIAVVAAGIGYWKLTGEESDTLRKIVLEECLPNQQQNQNPSPCAEVKPNAGYVVLKDLNGPLQYLLMPTYRINGTESPLLTDPSTPNFFWLAWQARDFMSKKYGQPVPDRAVSLAINSRTGHTQNHFHIHISCIRPDVREQLDKNLANISSRWLPLPGGLRGHEYLARRVTESELVQRSPFMMLAEEVPEAREHMGSYGLAMVRQSDNSFVLLATQRNLLTLNRASAEEIQDHECEILR.

Residues 4–24 traverse the membrane as a helical segment; that stretch reads AGLLFLVMIVIAVVAAGIGYW.

The protein belongs to the Cdh family.

It is found in the cell inner membrane. It carries out the reaction a CDP-1,2-diacyl-sn-glycerol + H2O = a 1,2-diacyl-sn-glycero-3-phosphate + CMP + 2 H(+). The protein operates within phospholipid metabolism; CDP-diacylglycerol degradation; phosphatidate from CDP-diacylglycerol: step 1/1. This is CDP-diacylglycerol pyrophosphatase from Shigella flexneri.